We begin with the raw amino-acid sequence, 110 residues long: UPF0122 protein GK1195 (110 aa).

This sequence belongs to the UPF0122 family.

Functionally, might take part in the signal recognition particle (SRP) pathway. This is inferred from the conservation of its genetic proximity to ftsY/ffh. May be a regulatory protein. The chain is UPF0122 protein GK1195 from Geobacillus kaustophilus (strain HTA426).